The sequence spans 69 residues: Large ribosomal subunit protein bL31 (69 aa).

Residues cysteine 16, cysteine 18, cysteine 36, and cysteine 39 each contribute to the Zn(2+) site.

Belongs to the bacterial ribosomal protein bL31 family. Type A subfamily. In terms of assembly, part of the 50S ribosomal subunit. Zn(2+) is required as a cofactor.

Functionally, binds the 23S rRNA. The protein is Large ribosomal subunit protein bL31 of Thermosipho africanus (strain TCF52B).